The primary structure comprises 235 residues: MRLKILIKLSGAGMSADSSEPFSNQFLETVIAQLKQLVPNYQIGIVIGGGNIMRGKSCSDYNITEIAGHHLGIMATVINGAFLKAKFDSHKLNSTLLSAVSCPSLATHIVSQTTIDDAFKNHDIVIFAGGTGNPYFSTDTAVALRATQMQADIILIGKNGVDGVYTADPKKDKHAKFLASLTYAEAIKNDLQIMDITAFTMCKENNLKVIIFNINAEHAIIKALSKQGKYTLIEK.

8–11 (KLSG) contacts ATP. Position 49 (Gly-49) interacts with UMP. Residues Gly-50 and Arg-54 each contribute to the ATP site. Residue 131 to 138 (TGNPYFST) coordinates UMP. Residues Asn-159, Tyr-165, and Asp-168 each coordinate ATP.

This sequence belongs to the UMP kinase family. As to quaternary structure, homohexamer.

Its subcellular location is the cytoplasm. The catalysed reaction is UMP + ATP = UDP + ADP. The protein operates within pyrimidine metabolism; CTP biosynthesis via de novo pathway; UDP from UMP (UMPK route): step 1/1. Its activity is regulated as follows. Inhibited by UTP. Its function is as follows. Catalyzes the reversible phosphorylation of UMP to UDP. This chain is Uridylate kinase, found in Mycoplasma pneumoniae (strain ATCC 29342 / M129 / Subtype 1) (Mycoplasmoides pneumoniae).